Reading from the N-terminus, the 402-residue chain is MAT+ sexual cell fertilization-promoting factor (402 aa).

The segment at residues 169–237 (IPRPPNAYIL…KLMSAHPHYR (69 aa)) is a DNA-binding region (HMG box). The interval 246–272 (IRRRAPRRNRAQEVANASPIGENSGAP) is disordered.

Its subcellular location is the nucleus. Functionally, controls fertilization, probably by determining the mating type. This chain is MAT+ sexual cell fertilization-promoting factor (FPR1), found in Podospora anserina (Pleurage anserina).